The sequence spans 75 residues: Peptide Ctri10036 (75 aa).

The signal sequence occupies residues 1 to 22 (MNSKYLFVFLILNVIFIDLCQG). At K41 the chain carries Lysine amide. Positions 47 to 75 (ELGSQYDYLQDFRKRELDLDDLLSKFPDY) are excised as a propeptide.

This sequence belongs to the non-disulfide-bridged peptide (NDBP) superfamily. Short antimicrobial peptide (group 4) family. As to expression, expressed by the venom gland.

The protein localises to the secreted. In Chaerilus tricostatus (Scorpion), this protein is Peptide Ctri10036.